Reading from the N-terminus, the 1064-residue chain is Carbamoyl phosphate synthase large chain (1064 aa).

A carboxyphosphate synthetic domain region spans residues methionine 1–glutamate 401. Positions 129, 169, 175, 176, 208, 210, 215, 241, 242, 243, 284, and 298 each coordinate ATP. One can recognise an ATP-grasp 1 domain in the interval lysine 133 to isoleucine 327. Mg(2+) is bound by residues glutamine 284, glutamate 298, and asparagine 300. 3 residues coordinate Mn(2+): glutamine 284, glutamate 298, and asparagine 300. An oligomerization domain region spans residues isoleucine 402 to serine 546. Residues lysine 547–lysine 929 are carbamoyl phosphate synthetic domain. The 191-residue stretch at glutamate 671–leucine 861 folds into the ATP-grasp 2 domain. 10 residues coordinate ATP: arginine 707, serine 746, leucine 748, glutamate 752, glycine 777, valine 778, histidine 779, serine 780, glutamine 820, and glutamate 832. Residues glutamine 820, glutamate 832, and asparagine 834 each contribute to the Mg(2+) site. Mn(2+) is bound by residues glutamine 820, glutamate 832, and asparagine 834. The MGS-like domain occupies leucine 930–isoleucine 1064. Residues leucine 930 to isoleucine 1064 are allosteric domain.

The protein belongs to the CarB family. In terms of assembly, composed of two chains; the small (or glutamine) chain promotes the hydrolysis of glutamine to ammonia, which is used by the large (or ammonia) chain to synthesize carbamoyl phosphate. Tetramer of heterodimers (alpha,beta)4. It depends on Mg(2+) as a cofactor. Mn(2+) serves as cofactor.

It carries out the reaction hydrogencarbonate + L-glutamine + 2 ATP + H2O = carbamoyl phosphate + L-glutamate + 2 ADP + phosphate + 2 H(+). The catalysed reaction is hydrogencarbonate + NH4(+) + 2 ATP = carbamoyl phosphate + 2 ADP + phosphate + 2 H(+). Its pathway is amino-acid biosynthesis; L-arginine biosynthesis; carbamoyl phosphate from bicarbonate: step 1/1. The protein operates within pyrimidine metabolism; UMP biosynthesis via de novo pathway; (S)-dihydroorotate from bicarbonate: step 1/3. Large subunit of the glutamine-dependent carbamoyl phosphate synthetase (CPSase). CPSase catalyzes the formation of carbamoyl phosphate from the ammonia moiety of glutamine, carbonate, and phosphate donated by ATP, constituting the first step of 2 biosynthetic pathways, one leading to arginine and/or urea and the other to pyrimidine nucleotides. The large subunit (synthetase) binds the substrates ammonia (free or transferred from glutamine from the small subunit), hydrogencarbonate and ATP and carries out an ATP-coupled ligase reaction, activating hydrogencarbonate by forming carboxy phosphate which reacts with ammonia to form carbamoyl phosphate. The protein is Carbamoyl phosphate synthase large chain of Lactococcus lactis subsp. lactis (strain IL1403) (Streptococcus lactis).